A 410-amino-acid polypeptide reads, in one-letter code: NADH-quinone oxidoreductase subunit H (410 aa).

A run of 9 helical transmembrane segments spans residues 11–31 (LVAAKAIAVFVFLMLTVLVAI), 79–99 (FVYFVAPIISVIPAFTAFAFI), 119–139 (LPVAVLFILGLSAIGVYGIVL), 160–180 (VISYEVAMGLSFATVFLMAGT), 192–212 (GVWYAFLLLPSFVIYLISMVG), 257–277 (ALAATLFFGGWHAPWPLNMWA), 283–303 (WWPLIWFTAKVWGFLFIYFWL), 317–337 (ALGWKLLIPVSLVWVMVAAII), and 347–367 (YWTPTLVFSSIVVAAAMVLLL). Positions 376–410 (ARASARQRGDEGTSPEPAFPTPPLLAGATKENAGG) are disordered.

This sequence belongs to the complex I subunit 1 family. In terms of assembly, NDH-1 is composed of 14 different subunits. Subunits NuoA, H, J, K, L, M, N constitute the membrane sector of the complex.

It is found in the cell membrane. It catalyses the reaction a quinone + NADH + 5 H(+)(in) = a quinol + NAD(+) + 4 H(+)(out). Functionally, NDH-1 shuttles electrons from NADH, via FMN and iron-sulfur (Fe-S) centers, to quinones in the respiratory chain. The immediate electron acceptor for the enzyme in this species is believed to be menaquinone. Couples the redox reaction to proton translocation (for every two electrons transferred, four hydrogen ions are translocated across the cytoplasmic membrane), and thus conserves the redox energy in a proton gradient. The polypeptide is NADH-quinone oxidoreductase subunit H (Mycobacterium bovis (strain ATCC BAA-935 / AF2122/97)).